Consider the following 274-residue polypeptide: Transcription factor MYB32 (274 aa).

HTH myb-type domains are found at residues 9–61 (KDHT…INYL) and 62–116 (RPDL…KRKL). DNA-binding regions (H-T-H motif) lie at residues 37–61 (WRSL…INYL) and 89–112 (WSLI…NTHV). Positions 123 to 144 (PATHRPINETKTSQDSSDSSKT) are disordered.

As to expression, mostly expressed in roots, and, to a lower extent, in stems, flower buds, and siliques.

It is found in the nucleus. The protein is Transcription factor MYB32 (MYB32) of Arabidopsis thaliana (Mouse-ear cress).